The following is a 237-amino-acid chain: 1-(5-phosphoribosyl)-5-[(5-phosphoribosylamino)methylideneamino] imidazole-4-carboxamide isomerase (237 aa).

The active-site Proton acceptor is the aspartate 8. Residue aspartate 129 is the Proton donor of the active site.

The protein belongs to the HisA/HisF family.

Its subcellular location is the cytoplasm. The enzyme catalyses 1-(5-phospho-beta-D-ribosyl)-5-[(5-phospho-beta-D-ribosylamino)methylideneamino]imidazole-4-carboxamide = 5-[(5-phospho-1-deoxy-D-ribulos-1-ylimino)methylamino]-1-(5-phospho-beta-D-ribosyl)imidazole-4-carboxamide. The protein operates within amino-acid biosynthesis; L-histidine biosynthesis; L-histidine from 5-phospho-alpha-D-ribose 1-diphosphate: step 4/9. In Methanosphaera stadtmanae (strain ATCC 43021 / DSM 3091 / JCM 11832 / MCB-3), this protein is 1-(5-phosphoribosyl)-5-[(5-phosphoribosylamino)methylideneamino] imidazole-4-carboxamide isomerase.